A 434-amino-acid chain; its full sequence is MFS-type transporter pynF (434 aa).

Residues 1-13 show a composition bias toward basic and acidic residues; that stretch reads MSHDQRSPSEEVS. The segment at 1–34 is disordered; that stretch reads MSHDQRSPSEEVSRTALSKPASESTIVGDGHHPL. 12 helical membrane passes run 44-64, 84-104, 109-129, 138-158, 171-191, 203-223, 249-269, 280-302, 311-331, 334-354, 375-395, and 402-422; these read WLVV…LNAF, IAWI…VVGP, VGAT…LMLT, LILA…YPTI, IALG…TEII, TVRA…VLII, LLFS…FFYL, VTGA…VLTG, FNVI…LHKI, SGAI…LISL, LMMG…GALL, and WYGF…VTIL.

Belongs to the major facilitator superfamily. Monocarboxylate porter (TC 2.A.1.13) family.

It localises to the cell membrane. Its function is as follows. MFS-type transporter; part of the gene cluster that mediates the biosynthesis of pyranonigrins, a family of antioxidative compounds. May be involved in the secretion of pyranonigrins. The polypeptide is MFS-type transporter pynF (Aspergillus niger (strain ATCC MYA-4892 / CBS 513.88 / FGSC A1513)).